Here is a 147-residue protein sequence, read N- to C-terminus: Large ribosomal subunit protein uL15 (147 aa).

Positions 1–15 (MTDRVKKTRKLRGHV) are enriched in basic residues. The tract at residues 1–34 (MTDRVKKTRKLRGHVSHGYGRVGKHRKHSGGRGL) is disordered.

Belongs to the universal ribosomal protein uL15 family.

This chain is Large ribosomal subunit protein uL15 (RPL27A), found in Encephalitozoon cuniculi (strain GB-M1) (Microsporidian parasite).